A 580-amino-acid polypeptide reads, in one-letter code: TRAF-type zinc finger domain-containing protein 1 (580 aa).

Position 2 is an N-acetylalanine (Ala2). The TRAF-type zinc-finger motif lies at 27–103 (IHEIHCQRNI…DLELSVVKLK (77 aa)). 10 positions are modified to phosphoserine: Ser278, Ser320, Ser326, Ser327, Ser409, Ser415, Ser430, Ser450, Ser469, and Ser532. Disordered regions lie at residues 395–453 (TANH…SPNR), 468–509 (PSGP…ASGH), and 524–580 (FAPS…EEEE). The segment covering 407 to 417 (QDSQPENTSAE) has biased composition (polar residues).

Interacts with MAVS, TICAM1, TRAF1, TRAF2, TRAF3 and TRAF6. Expressed in skeletal muscle, brain, liver, kidney, spleen and bone marrow. Expression depends on STAT1.

Negative feedback regulator that controls excessive innate immune responses. Regulates both Toll-like receptor 4 (TLR4) and DDX58/RIG1-like helicases (RLH) pathways. May inhibit the LTR pathway by direct interaction with TRAF6 and attenuation of NF-kappa-B activation. May negatively regulate the RLH pathway downstream from MAVS and upstream of NF-kappa-B and IRF3. This Mus musculus (Mouse) protein is TRAF-type zinc finger domain-containing protein 1 (Trafd1).